The following is a 281-amino-acid chain: UPF0162 protein XF_1494 (281 aa).

2 TPR repeats span residues Val-193–Gln-226 and Pro-227–Thr-260.

This sequence belongs to the UPF0162 family.

This is UPF0162 protein XF_1494 from Xylella fastidiosa (strain 9a5c).